The chain runs to 332 residues: GTP 3',8-cyclase (332 aa).

One can recognise a Radical SAM core domain in the interval 9–220 (GYNRRVDYLR…TQVRERIAER (212 aa)). Arginine 18 is a GTP binding site. [4Fe-4S] cluster is bound by residues cysteine 25 and cysteine 29. Tyrosine 31 provides a ligand contact to S-adenosyl-L-methionine. Cysteine 32 serves as a coordination point for [4Fe-4S] cluster. Position 67 (arginine 67) interacts with GTP. An S-adenosyl-L-methionine-binding site is contributed by glycine 71. Threonine 98 is a binding site for GTP. S-adenosyl-L-methionine is bound at residue serine 122. Position 159 (lysine 159) interacts with GTP. Methionine 193 contacts S-adenosyl-L-methionine. Residues cysteine 258 and cysteine 261 each contribute to the [4Fe-4S] cluster site. 263–265 (RVR) is a binding site for GTP. Cysteine 275 contributes to the [4Fe-4S] cluster binding site.

The protein belongs to the radical SAM superfamily. MoaA family. In terms of assembly, monomer and homodimer. It depends on [4Fe-4S] cluster as a cofactor.

It carries out the reaction GTP + AH2 + S-adenosyl-L-methionine = (8S)-3',8-cyclo-7,8-dihydroguanosine 5'-triphosphate + 5'-deoxyadenosine + L-methionine + A + H(+). Its pathway is cofactor biosynthesis; molybdopterin biosynthesis. Catalyzes the cyclization of GTP to (8S)-3',8-cyclo-7,8-dihydroguanosine 5'-triphosphate. The chain is GTP 3',8-cyclase from Pseudomonas fluorescens (strain Pf0-1).